Consider the following 356-residue polypeptide: 4-hydroxy-2-oxovalerate aldolase (356 aa).

The Pyruvate carboxyltransferase domain occupies 7-257 (PRVTDTTLRD…NPGLDVFKLM (251 aa)). A substrate-binding site is contributed by 15–16 (RD). Asp-16 contributes to the Mn(2+) binding site. The active-site Proton acceptor is the His-19. Positions 169 and 196 each coordinate substrate. Mn(2+) is bound by residues His-196 and His-198. Tyr-287 is a binding site for substrate.

The protein belongs to the 4-hydroxy-2-oxovalerate aldolase family.

It catalyses the reaction (S)-4-hydroxy-2-oxopentanoate = acetaldehyde + pyruvate. This is 4-hydroxy-2-oxovalerate aldolase from Thermomicrobium roseum (strain ATCC 27502 / DSM 5159 / P-2).